Consider the following 169-residue polypeptide: uncharacterized protein (169 aa).

The N-terminal 91 residues, 1–91 (MFSSTFRRLA…NKEQYTVRCL (91 aa)), are a transit peptide targeting the mitochondrion. Residues 54 to 76 (PQPKSPGSLPSSTRTAPNPNGEE) are disordered. The span at 61–71 (SLPSSTRTAPN) shows a compositional bias: polar residues.

The protein localises to the mitochondrion. This is an uncharacterized protein from Trypanosoma brucei brucei (strain 927/4 GUTat10.1).